Consider the following 438-residue polypeptide: Trigger factor (438 aa).

The 86-residue stretch at 162–247 (GDRVNINYQG…LNKVEAPKLP (86 aa)) folds into the PPIase FKBP-type domain.

Belongs to the FKBP-type PPIase family. Tig subfamily.

It localises to the cytoplasm. The enzyme catalyses [protein]-peptidylproline (omega=180) = [protein]-peptidylproline (omega=0). Its function is as follows. Involved in protein export. Acts as a chaperone by maintaining the newly synthesized protein in an open conformation. Functions as a peptidyl-prolyl cis-trans isomerase. The protein is Trigger factor of Nitrosomonas eutropha (strain DSM 101675 / C91 / Nm57).